The following is a 385-amino-acid chain: Probable caffeine synthase 4 (385 aa).

S-adenosyl-L-homocysteine is bound by residues Y18, C62, N67, D101, L102, S140, and F141. The caffeine site is built by Y158, Q161, and F162. Mg(2+) is bound at residue N179. T238 contacts caffeine. The Mg(2+) site is built by D261, F263, and N264. Y369 provides a ligand contact to caffeine.

The protein belongs to the methyltransferase superfamily. Type-7 methyltransferase family. It depends on Mg(2+) as a cofactor. In terms of tissue distribution, expressed in roots, stems, young and old leaves.

The protein operates within alkaloid biosynthesis. Functionally, may be involved in the biosynthesis of caffeine. This Coffea arabica (Arabian coffee) protein is Probable caffeine synthase 4.